We begin with the raw amino-acid sequence, 145 residues long: MKIKIQKIHPNALIPKYQTEGSSGFDLHAVEEVTIKPHSVGLVKIGICLSLEVGYELQVRTRSGLALNHQVMVLNSPGTVDNDYRGEIKVILANLSDKDFKVQVGDRIAQGVVQKTYKAEFIECEQLDETSRGSGGFGSTGVSKA.

Substrate is bound by residues 62–64, asparagine 75, 79–81, and lysine 89; these read RSG and TVD.

This sequence belongs to the dUTPase family. Requires Mg(2+) as cofactor.

It carries out the reaction dUTP + H2O = dUMP + diphosphate + H(+). It functions in the pathway pyrimidine metabolism; dUMP biosynthesis; dUMP from dCTP (dUTP route): step 2/2. This enzyme is involved in nucleotide metabolism: it produces dUMP, the immediate precursor of thymidine nucleotides and it decreases the intracellular concentration of dUTP so that uracil cannot be incorporated into DNA. The sequence is that of Deoxyuridine 5'-triphosphate nucleotidohydrolase from Helicobacter pylori (strain P12).